The following is a 377-amino-acid chain: Probable O-methyltransferase 3 (377 aa).

An S-adenosyl-L-methionine-binding site is contributed by D241. The Proton acceptor role is filled by H279.

The protein belongs to the class I-like SAM-binding methyltransferase superfamily. Cation-independent O-methyltransferase family. In terms of tissue distribution, highly expressed in lupulin glands. Detected in early-, mid- and late-stage cones.

This is Probable O-methyltransferase 3 from Humulus lupulus (European hop).